A 341-amino-acid polypeptide reads, in one-letter code: 33 kDa chaperonin (341 aa).

Disulfide bonds link cysteine 245-cysteine 247 and cysteine 278-cysteine 281.

The protein belongs to the HSP33 family. In terms of processing, under oxidizing conditions two disulfide bonds are formed involving the reactive cysteines. Under reducing conditions zinc is bound to the reactive cysteines and the protein is inactive.

It localises to the cytoplasm. In terms of biological role, redox regulated molecular chaperone. Protects both thermally unfolding and oxidatively damaged proteins from irreversible aggregation. Plays an important role in the bacterial defense system toward oxidative stress. The sequence is that of 33 kDa chaperonin from Thermus thermophilus (strain ATCC 27634 / DSM 579 / HB8).